The primary structure comprises 494 residues: Alpha-amylase-related protein (494 aa).

The signal sequence occupies residues 1-20; sequence MIKFALALTLCLAGASLSLA. Gln-21 bears the Pyrrolidone carboxylic acid mark. Cysteines 48 and 104 form a disulfide. The Ca(2+) site is built by Asn-118, Gln-169, and Asp-178. Cysteines 157 and 171 form a disulfide. Arg-206 is a chloride binding site. Asp-208 (nucleophile) is an active-site residue. A Ca(2+)-binding site is contributed by His-212. The active-site Proton donor is the Glu-245. Positions 308 and 343 each coordinate chloride. 3 disulfide bridges follow: Cys-376–Cys-382, Cys-418–Cys-441, and Cys-448–Cys-460.

The protein belongs to the glycosyl hydrolase 13 family. In terms of assembly, monomer. Requires Ca(2+) as cofactor. Chloride is required as a cofactor.

The protein localises to the secreted. It carries out the reaction Endohydrolysis of (1-&gt;4)-alpha-D-glucosidic linkages in polysaccharides containing three or more (1-&gt;4)-alpha-linked D-glucose units.. This is Alpha-amylase-related protein (Amyrel) from Drosophila bakoue (Fruit fly).